A 359-amino-acid polypeptide reads, in one-letter code: Phosphate acyltransferase (359 aa).

The protein belongs to the PlsX family. In terms of assembly, homodimer. Probably interacts with PlsY.

It is found in the cytoplasm. The catalysed reaction is a fatty acyl-[ACP] + phosphate = an acyl phosphate + holo-[ACP]. It functions in the pathway lipid metabolism; phospholipid metabolism. Functionally, catalyzes the reversible formation of acyl-phosphate (acyl-PO(4)) from acyl-[acyl-carrier-protein] (acyl-ACP). This enzyme utilizes acyl-ACP as fatty acyl donor, but not acyl-CoA. In Salmonella heidelberg (strain SL476), this protein is Phosphate acyltransferase.